The following is a 336-amino-acid chain: Aldehyde reductase AdhA (336 aa).

Zn(2+)-binding residues include C36, C39, H61, C92, C95, C98, C106, and C148.

Belongs to the zinc-containing alcohol dehydrogenase family. Homotetramer. The cofactor is Zn(2+).

The protein resides in the cytoplasm. It carries out the reaction a primary alcohol + NADP(+) = an aldehyde + NADPH + H(+). Its function is as follows. Active on a wide variety of primary alcohols and their corresponding aldehydes, but not against ketones nor secondary alcohols. Active on aliphatic compounds up to 5 carbons in length and aromatic alcohols, less effective on branched-chain primary alcohols. Prefers NADPH to NADH. Its catalytic efficiency is greatest for aldehydes, suggesting the reduction of aromatic and medium-chain aliphatic aldehydes is its in vivo activity. Plays a role in tolerance to internally produced ethanol. This is Aldehyde reductase AdhA from Synechocystis sp. (strain ATCC 27184 / PCC 6803 / Kazusa).